We begin with the raw amino-acid sequence, 532 residues long: KICSTOR complex protein ITFG2 (532 aa).

An FG-GAP 1; atypical repeat occupies 19 to 48; sequence FPHAICLGDVDNDTLNELVVGDTSGKLSVY. Serine 104 carries the phosphoserine modification. The stretch at 126 to 155 is one FG-GAP 2; atypical repeat; it reads NTKVMLISDIDGDGRCELVVGYTDRVVRAF. The segment at 248–271 is disordered; that stretch reads PHPQQERLHSPHRQHQASHSPDSS.

In terms of assembly, part of the KICSTOR complex composed of KPTN, ITFG2, KICS2 and SZT2. SZT2 probably serves as a link between the other three proteins in the KICSTOR complex and may mediate the direct interaction with the GATOR complex via GATOR1. The KICSTOR complex interacts directly with the GATOR1 complex and most probably indirectly with the GATOR2 complex in an amino acid-independent manner.

It localises to the lysosome membrane. Its function is as follows. As part of the KICSTOR complex functions in the amino acid-sensing branch of the TORC1 signaling pathway. Recruits, in an amino acid-independent manner, the GATOR1 complex to the lysosomal membranes and allows its interaction with GATOR2 and the RAG GTPases. Functions upstream of the RAG GTPases and is required to negatively regulate mTORC1 signaling in absence of amino acids. In absence of the KICSTOR complex mTORC1 is constitutively localized to the lysosome and activated. The KICSTOR complex is also probably involved in the regulation of mTORC1 by glucose. This chain is KICSTOR complex protein ITFG2, found in Bos taurus (Bovine).